Consider the following 483-residue polypeptide: V-type proton ATPase subunit B 2 (483 aa).

The protein belongs to the ATPase alpha/beta chains family. In terms of assembly, V-ATPase is a heteromultimeric enzyme composed of a peripheral catalytic V1 complex (main components: subunits A, B, C, D, E, and F) attached to an integral membrane V0 proton pore complex (main component: the proteolipid protein).

Functionally, non-catalytic subunit of the peripheral V1 complex of vacuolar ATPase. V-ATPase is responsible for acidifying a variety of intracellular compartments in eukaryotic cells. The sequence is that of V-type proton ATPase subunit B 2 from Hordeum vulgare (Barley).